We begin with the raw amino-acid sequence, 1025 residues long: Leucyl-cystinyl aminopeptidase (1025 aa).

Residue methionine 1 is modified to N-acetylmethionine. Residues 1–109 (MESFTNDRLQ…DGTCSLPSAR (109 aa)) lie on the Cytoplasmic side of the membrane. A Dileucine internalization motif motif is present at residues 53–54 (LL). Position 70 is a phosphotyrosine (tyrosine 70). Residues 76-77 (LL) carry the Dileucine internalization motif motif. A phosphoserine mark is found at serine 80 and serine 91. A tankyrase binding region spans residues 96-101 (RQSPDG). Residues 110-131 (TLVICVFVIVVAVSVIMVIYLL) traverse the membrane as a helical; Signal-anchor for type II membrane protein segment. At 132–1025 (PRCTFTKEGC…RNLKTLSQWL (894 aa)) the chain is on the extracellular side. N-linked (GlcNAc...) asparagine glycosylation is found at asparagine 145, asparagine 184, asparagine 215, asparagine 256, and asparagine 266. Residue glutamate 295 coordinates substrate. N-linked (GlcNAc...) asparagine glycans are attached at residues asparagine 368 and asparagine 374. Residue 428 to 432 (GAMEN) coordinates substrate. An N-linked (GlcNAc...) asparagine glycan is attached at asparagine 447. Histidine 464 is a binding site for Zn(2+). Glutamate 465 acts as the Proton acceptor in catalysis. Zn(2+)-binding residues include histidine 468 and glutamate 487. N-linked (GlcNAc...) asparagine glycosylation is found at asparagine 525, asparagine 578, asparagine 664, asparagine 682, asparagine 695, asparagine 758, asparagine 834, asparagine 850, and asparagine 989.

This sequence belongs to the peptidase M1 family. As to quaternary structure, homodimer. Binds tankyrases 1 and 2. It depends on Zn(2+) as a cofactor.

It is found in the cell membrane. Its subcellular location is the endomembrane system. The enzyme catalyses Release of an N-terminal amino acid, Cys-|-Xaa-, in which the half-cystine residue is involved in a disulfide loop, notably in oxytocin or vasopressin. Hydrolysis rates on a range of aminoacyl arylamides exceed that for the cystinyl derivative, however.. Functionally, release of an N-terminal amino acid, cleave before cysteine, leucine as well as other amino acids. Degrades peptide hormones such as oxytocin, vasopressin and angiotensin III, and plays a role in maintaining homeostasis during pregnancy. May be involved in the inactivation of neuronal peptides in the brain. Cleaves Met-enkephalin and dynorphin. Binds angiotensin IV and may be the angiotensin IV receptor in the brain. The sequence is that of Leucyl-cystinyl aminopeptidase (Lnpep) from Mus musculus (Mouse).